We begin with the raw amino-acid sequence, 274 residues long: Putative ankyrin repeat protein R597 (274 aa).

ANK repeat units lie at residues 78-112, 114-144, 146-174, and 176-205; these read VGLP…NNND, PISE…SLKI, SRYH…DIQG, and NLSY…NIND.

This chain is Putative ankyrin repeat protein R597, found in Acanthamoeba polyphaga mimivirus (APMV).